Consider the following 401-residue polypeptide: Nicotinate phosphoribosyltransferase (401 aa).

Histidine 221 is modified (phosphohistidine; by autocatalysis).

It belongs to the NAPRTase family. Transiently phosphorylated on a His residue during the reaction cycle. Phosphorylation strongly increases the affinity for substrates and increases the rate of nicotinate D-ribonucleotide production. Dephosphorylation regenerates the low-affinity form of the enzyme, leading to product release.

The enzyme catalyses nicotinate + 5-phospho-alpha-D-ribose 1-diphosphate + ATP + H2O = nicotinate beta-D-ribonucleotide + ADP + phosphate + diphosphate. It participates in cofactor biosynthesis; NAD(+) biosynthesis; nicotinate D-ribonucleotide from nicotinate: step 1/1. Its function is as follows. Catalyzes the synthesis of beta-nicotinate D-ribonucleotide from nicotinate and 5-phospho-D-ribose 1-phosphate at the expense of ATP. In Serratia proteamaculans (strain 568), this protein is Nicotinate phosphoribosyltransferase.